A 144-amino-acid polypeptide reads, in one-letter code: D-aminoacyl-tRNA deacylase (144 aa).

The Gly-cisPro motif, important for rejection of L-amino acids motif lies at 136 to 137 (GP).

The protein belongs to the DTD family. In terms of assembly, homodimer.

The protein localises to the cytoplasm. The enzyme catalyses glycyl-tRNA(Ala) + H2O = tRNA(Ala) + glycine + H(+). The catalysed reaction is a D-aminoacyl-tRNA + H2O = a tRNA + a D-alpha-amino acid + H(+). Functionally, an aminoacyl-tRNA editing enzyme that deacylates mischarged D-aminoacyl-tRNAs. Also deacylates mischarged glycyl-tRNA(Ala), protecting cells against glycine mischarging by AlaRS. Acts via tRNA-based rather than protein-based catalysis; rejects L-amino acids rather than detecting D-amino acids in the active site. By recycling D-aminoacyl-tRNA to D-amino acids and free tRNA molecules, this enzyme counteracts the toxicity associated with the formation of D-aminoacyl-tRNA entities in vivo and helps enforce protein L-homochirality. The chain is D-aminoacyl-tRNA deacylase from Vibrio parahaemolyticus serotype O3:K6 (strain RIMD 2210633).